The sequence spans 104 residues: MGLFSFDGGKKESQPPNTRSQRKLCWESRDAFFQCLDKADILDAMDPKNSKSIKSHCKVENEKFEENCAHSWIKYFKEKRVIDFKREQTIKRIEQEAKQRERNQ.

Residues 1–22 (MGLFSFDGGKKESQPPNTRSQR) form a disordered region. The CHCH domain occupies 22 to 76 (RKLCWESRDAFFQCLDKADILDAMDPKNSKSIKSHCKVENEKFEENCAHSWIKYF). A Cx9C motif motif is present at residues 25 to 35 (CWESRDAFFQC). 2 disulfide bridges follow: cysteine 25/cysteine 68 and cysteine 35/cysteine 57. Residues 57–68 (CKVENEKFEENC) carry the Cx10C motif motif.

It belongs to the cytochrome c oxidase subunit 6B family. As to quaternary structure, interacts with COX2.

It localises to the cytoplasm. It is found in the nucleus. The protein resides in the mitochondrion intermembrane space. Its function is as follows. Involved in the maturation of the mitochondrial respiratory chain complex IV subunit MT-CO2/COX2. Thereby, may regulate early steps of complex IV assembly. Mitochondrial respiratory chain complex IV or cytochrome c oxidase is the component of the respiratory chain that catalyzes the transfer of electrons from intermembrane space cytochrome c to molecular oxygen in the matrix and as a consequence contributes to the proton gradient involved in mitochondrial ATP synthesis. May also be required for efficient formation of respiratory supercomplexes comprised of complexes III and IV. The sequence is that of Cytochrome c oxidase assembly factor 6 from Saccharomyces cerevisiae (strain ATCC 204508 / S288c) (Baker's yeast).